A 411-amino-acid chain; its full sequence is Anthranilate synthase component 1 (411 aa).

Residues S27 and 203–205 contribute to the L-tryptophan site; that span reads PYM. 237–238 lines the chorismate pocket; sequence GT. E262 lines the Mg(2+) pocket. Residues Y350, R369, 382–384, and G384 each bind chorismate; that span reads GAG. E397 provides a ligand contact to Mg(2+).

The protein belongs to the anthranilate synthase component I family. Heterotetramer consisting of two non-identical subunits: a beta subunit (TrpG) and a large alpha subunit (TrpE). Mg(2+) serves as cofactor.

The enzyme catalyses chorismate + L-glutamine = anthranilate + pyruvate + L-glutamate + H(+). It participates in amino-acid biosynthesis; L-tryptophan biosynthesis; L-tryptophan from chorismate: step 1/5. Its activity is regulated as follows. Feedback inhibited by tryptophan. Functionally, part of a heterotetrameric complex that catalyzes the two-step biosynthesis of anthranilate, an intermediate in the biosynthesis of L-tryptophan. In the first step, the glutamine-binding beta subunit (TrpG) of anthranilate synthase (AS) provides the glutamine amidotransferase activity which generates ammonia as a substrate that, along with chorismate, is used in the second step, catalyzed by the large alpha subunit of AS (TrpE) to produce anthranilate. In the absence of TrpG, TrpE can synthesize anthranilate directly from chorismate and high concentrations of ammonia. This chain is Anthranilate synthase component 1 (trpE), found in Archaeoglobus fulgidus (strain ATCC 49558 / DSM 4304 / JCM 9628 / NBRC 100126 / VC-16).